Consider the following 172-residue polypeptide: Alpha-crystallin A chain (172 aa).

M1 is modified (N-acetylmethionine). The required for complex formation with BFSP1 and BFSP2 stretch occupies residues 1 to 63; the sequence is MDVTIQHPWF…RTVLDSGISE (63 aa). Deamidated glutamine; partial is present on Q6. S45 carries the phosphoserine modification. At Q50 the chain carries Deamidated glutamine; partial. The region spanning 52 to 163 is the sHSP domain; it reads LFRTVLDSGI…HERAIPVARE (112 aa). N6-acetyllysine is present on K70. Position 90 is a deamidated glutamine; partial (Q90). K99 is subject to N6-acetyllysine. H100 is a binding site for Zn(2+). The residue at position 101 (N101) is a Deamidated asparagine; partial. Residues E102 and H107 each coordinate Zn(2+). At S122 the chain carries Phosphoserine. The residue at position 123 (N123) is a Deamidated asparagine; partial. The residue at position 147 (Q147) is a Deamidated glutamine; partial. Zn(2+) is bound at residue H154. The O-linked (GlcNAc) serine glycan is linked to S168.

Belongs to the small heat shock protein (HSP20) family. As to quaternary structure, heteromer composed of three CRYAA and one CRYAB subunits. Inter-subunit bridging via zinc ions enhances stability, which is crucial as there is no protein turn over in the lens. Can also form homodimers and homotetramers (dimers of dimers) which serve as the building blocks of homooligomers. Within homooligomers, the zinc-binding motif is created from residues of 3 different molecules. His-100 and Glu-102 from one molecule are ligands of the zinc ion, and His-107 and His-154 residues from additional molecules complete the site with tetrahedral coordination geometry. Part of a complex required for lens intermediate filament formation composed of BFSP1, BFSP2 and CRYAA. Post-translationally, acetylation at Lys-70 may increase chaperone activity. Undergoes age-dependent proteolytical cleavage at the C-terminus.

Its subcellular location is the cytoplasm. It localises to the nucleus. Contributes to the transparency and refractive index of the lens. Acts as a chaperone, preventing aggregation of various proteins under a wide range of stress conditions. Required for the correct formation of lens intermediate filaments as part of a complex composed of BFSP1, BFSP2 and CRYAA. The protein is Alpha-crystallin A chain (CRYAA) of Macaca mulatta (Rhesus macaque).